The sequence spans 416 residues: MSRRYLFTSESVTEGHPDKICDQISDTIIDTLLYHDDQSRVAAEVVVNTGLVLITGEVTSKANVNFVELARKKIAEIGYTNADNGFSANSCAVLVALDEQSPDIAQGVTQAHEQRQALSDDELDQIGAGDQGIMFGYACNETPELMPLPISLAHRFSRRLAAVRKTGDLGYLRPDGKTQVSIVYEDGIPVGIDTILISTQHDETIDSITDNDGVQAKIKSDLWDAVVLPVLDNIGIKPSQETRFLVNPTGKFVIGGPQGDAGLTGRKIIVDTYGGYSRHGGGAFSGKDPTKVDRSAAYACRYVAKNIVAAGLAEKCEVQLSYAIGVARPVSILVETFGTGKVDENKLLDAVKELFELRPAGIIQALNLRQLPSQRGGRFYQDVAAYGHFGRNDLDLPWEATDKAALLKEALLKVGV.

His16 lines the ATP pocket. Asp18 contacts Mg(2+). Glu44 provides a ligand contact to K(+). L-methionine-binding residues include Glu57 and Gln100. Positions 100 to 110 (QSPDIAQGVTQ) are flexible loop. ATP-binding positions include 175–177 (DGK), 251–252 (KF), Asp260, 266–267 (RK), Ala283, and Lys287. Asp260 contributes to the L-methionine binding site. Lys291 contacts L-methionine.

The protein belongs to the AdoMet synthase family. In terms of assembly, homotetramer; dimer of dimers. It depends on Mg(2+) as a cofactor. K(+) is required as a cofactor.

Its subcellular location is the cytoplasm. The enzyme catalyses L-methionine + ATP + H2O = S-adenosyl-L-methionine + phosphate + diphosphate. It functions in the pathway amino-acid biosynthesis; S-adenosyl-L-methionine biosynthesis; S-adenosyl-L-methionine from L-methionine: step 1/1. Catalyzes the formation of S-adenosylmethionine (AdoMet) from methionine and ATP. The overall synthetic reaction is composed of two sequential steps, AdoMet formation and the subsequent tripolyphosphate hydrolysis which occurs prior to release of AdoMet from the enzyme. The polypeptide is S-adenosylmethionine synthase (Crocosphaera subtropica (strain ATCC 51142 / BH68) (Cyanothece sp. (strain ATCC 51142))).